The chain runs to 494 residues: Alpha-amylase 2 (494 aa).

Positions 1-18 (MFLAKSIVCLALLAVANA) are cleaved as a signal peptide. The cysteines at positions 46 and 102 are disulfide-linked. Positions 116, 165, and 174 each coordinate Ca(2+). An intrachain disulfide couples Cys153 to Cys167. Arg202 serves as a coordination point for chloride. The Nucleophile role is filled by Asp204. Residue His208 coordinates Ca(2+). Catalysis depends on Glu241, which acts as the Proton donor. Chloride contacts are provided by Asn304 and Arg343. The tract at residues 350 to 370 (FTDTDQGPPTTDGQNIASPSF) is disordered. Positions 351–363 (TDTDQGPPTTDGQ) are enriched in low complexity. 2 cysteine pairs are disulfide-bonded: Cys376/Cys382 and Cys448/Cys460.

Belongs to the glycosyl hydrolase 13 family. As to quaternary structure, monomer. It depends on Ca(2+) as a cofactor. Requires chloride as cofactor.

The catalysed reaction is Endohydrolysis of (1-&gt;4)-alpha-D-glucosidic linkages in polysaccharides containing three or more (1-&gt;4)-alpha-linked D-glucose units.. The polypeptide is Alpha-amylase 2 (Amy58) (Drosophila ananassae (Fruit fly)).